The following is a 1404-amino-acid chain: DNA-directed RNA polymerase subunit beta' (1404 aa).

Residues C70, C72, C85, and C88 each contribute to the Zn(2+) site. 3 residues coordinate Mg(2+): D458, D460, and D462. Zn(2+) is bound by residues C813, C887, C894, and C897. The disordered stretch occupies residues 1377 to 1404; that stretch reads ERRAIAESEAAELEASQAETSDENAAAE.

It belongs to the RNA polymerase beta' chain family. The RNAP catalytic core consists of 2 alpha, 1 beta, 1 beta' and 1 omega subunit. When a sigma factor is associated with the core the holoenzyme is formed, which can initiate transcription. The cofactor is Mg(2+). Zn(2+) serves as cofactor.

It catalyses the reaction RNA(n) + a ribonucleoside 5'-triphosphate = RNA(n+1) + diphosphate. Functionally, DNA-dependent RNA polymerase catalyzes the transcription of DNA into RNA using the four ribonucleoside triphosphates as substrates. This chain is DNA-directed RNA polymerase subunit beta', found in Polaromonas naphthalenivorans (strain CJ2).